The chain runs to 227 residues: Lipoprotein-releasing system ATP-binding protein LolD (227 aa).

Residues 6–227 form the ABC transporter domain; the sequence is LEMRGITKSY…RLDAGQLSDV (222 aa). Residue 43–50 participates in ATP binding; the sequence is APSGAGKS.

It belongs to the ABC transporter superfamily. Lipoprotein translocase (TC 3.A.1.125) family. In terms of assembly, the complex is composed of two ATP-binding proteins (LolD) and two transmembrane proteins (LolC and LolE).

It localises to the cell inner membrane. Its function is as follows. Part of the ABC transporter complex LolCDE involved in the translocation of mature outer membrane-directed lipoproteins, from the inner membrane to the periplasmic chaperone, LolA. Responsible for the formation of the LolA-lipoprotein complex in an ATP-dependent manner. The protein is Lipoprotein-releasing system ATP-binding protein LolD of Roseobacter denitrificans (strain ATCC 33942 / OCh 114) (Erythrobacter sp. (strain OCh 114)).